The primary structure comprises 120 residues: NAD(P)H-quinone oxidoreductase subunit 3, chloroplastic (120 aa).

3 consecutive transmembrane segments (helical) span residues phenylalanine 10–leucine 30, methionine 64–methionine 84, and leucine 89–valine 109.

The protein belongs to the complex I subunit 3 family. NDH is composed of at least 16 different subunits, 5 of which are encoded in the nucleus.

Its subcellular location is the plastid. The protein resides in the chloroplast thylakoid membrane. The enzyme catalyses a plastoquinone + NADH + (n+1) H(+)(in) = a plastoquinol + NAD(+) + n H(+)(out). The catalysed reaction is a plastoquinone + NADPH + (n+1) H(+)(in) = a plastoquinol + NADP(+) + n H(+)(out). In terms of biological role, NDH shuttles electrons from NAD(P)H:plastoquinone, via FMN and iron-sulfur (Fe-S) centers, to quinones in the photosynthetic chain and possibly in a chloroplast respiratory chain. The immediate electron acceptor for the enzyme in this species is believed to be plastoquinone. Couples the redox reaction to proton translocation, and thus conserves the redox energy in a proton gradient. The sequence is that of NAD(P)H-quinone oxidoreductase subunit 3, chloroplastic from Zygnema circumcarinatum (Green alga).